The following is a 134-amino-acid chain: NAD(P)H-quinone oxidoreductase subunit 3 (134 aa).

A run of 3 helical transmembrane segments spans residues 20–40, 78–98, and 103–123; these read GYDA…LALV, MFAL…PWAV, and LGLL…VALA.

The protein belongs to the complex I subunit 3 family. In terms of assembly, NDH-1 can be composed of about 15 different subunits; different subcomplexes with different compositions have been identified which probably have different functions.

It is found in the cellular thylakoid membrane. The enzyme catalyses a plastoquinone + NADH + (n+1) H(+)(in) = a plastoquinol + NAD(+) + n H(+)(out). It carries out the reaction a plastoquinone + NADPH + (n+1) H(+)(in) = a plastoquinol + NADP(+) + n H(+)(out). NDH-1 shuttles electrons from an unknown electron donor, via FMN and iron-sulfur (Fe-S) centers, to quinones in the respiratory and/or the photosynthetic chain. The immediate electron acceptor for the enzyme in this species is believed to be plastoquinone. Couples the redox reaction to proton translocation, and thus conserves the redox energy in a proton gradient. Cyanobacterial NDH-1 also plays a role in inorganic carbon-concentration. The protein is NAD(P)H-quinone oxidoreductase subunit 3 of Prochlorococcus marinus (strain MIT 9303).